Here is a 301-residue protein sequence, read N- to C-terminus: Pantothenate synthetase (301 aa).

30–37 (MGNLHEGH) serves as a coordination point for ATP. H37 serves as the catalytic Proton donor. Q61 is a (R)-pantoate binding site. Q61 lines the beta-alanine pocket. 149–152 (GEKD) provides a ligand contact to ATP. Residue Q155 coordinates (R)-pantoate. ATP contacts are provided by residues V178 and 186-189 (MSSR).

This sequence belongs to the pantothenate synthetase family. In terms of assembly, homodimer.

The protein localises to the cytoplasm. It carries out the reaction (R)-pantoate + beta-alanine + ATP = (R)-pantothenate + AMP + diphosphate + H(+). It participates in cofactor biosynthesis; (R)-pantothenate biosynthesis; (R)-pantothenate from (R)-pantoate and beta-alanine: step 1/1. Its function is as follows. Catalyzes the condensation of pantoate with beta-alanine in an ATP-dependent reaction via a pantoyl-adenylate intermediate. The polypeptide is Pantothenate synthetase (Vibrio parahaemolyticus serotype O3:K6 (strain RIMD 2210633)).